Consider the following 445-residue polypeptide: Tubby-like F-box protein 14 (445 aa).

The 59-residue stretch at 56–114 folds into the F-box domain; that stretch reads SSCWANLPPELLRDVIERLEASEAAWPSRKNVVACAAVCRTWRDMCREIVKNPEFCGKI.

It belongs to the TUB family. Ubiquitous.

This is Tubby-like F-box protein 14 (TULP14) from Oryza sativa subsp. japonica (Rice).